The following is an 89-amino-acid chain: Small ribosomal subunit protein uS14 (89 aa).

The protein belongs to the universal ribosomal protein uS14 family. In terms of assembly, part of the 30S ribosomal subunit. Contacts proteins S3 and S10.

Functionally, binds 16S rRNA, required for the assembly of 30S particles and may also be responsible for determining the conformation of the 16S rRNA at the A site. This chain is Small ribosomal subunit protein uS14, found in Porphyromonas gingivalis (strain ATCC 33277 / DSM 20709 / CIP 103683 / JCM 12257 / NCTC 11834 / 2561).